Reading from the N-terminus, the 363-residue chain is Oxygen-dependent coproporphyrinogen-III oxidase (363 aa).

Serine 119 is a substrate binding site. 2 residues coordinate a divalent metal cation: histidine 123 and histidine 133. Histidine 133 functions as the Proton donor in the catalytic mechanism. Asparagine 135–arginine 137 serves as a coordination point for substrate. Histidine 167 and histidine 197 together coordinate a divalent metal cation. Residues tyrosine 287–glutamate 322 form an important for dimerization region.

This sequence belongs to the aerobic coproporphyrinogen-III oxidase family. In terms of assembly, homodimer. A divalent metal cation serves as cofactor.

It localises to the cytoplasm. It catalyses the reaction coproporphyrinogen III + O2 + 2 H(+) = protoporphyrinogen IX + 2 CO2 + 2 H2O. The protein operates within porphyrin-containing compound metabolism; protoporphyrin-IX biosynthesis; protoporphyrinogen-IX from coproporphyrinogen-III (O2 route): step 1/1. Functionally, involved in the heme and chlorophyll biosynthesis. Catalyzes the aerobic oxidative decarboxylation of propionate groups of rings A and B of coproporphyrinogen-III to yield the vinyl groups in protoporphyrinogen-IX. The sequence is that of Oxygen-dependent coproporphyrinogen-III oxidase from Parasynechococcus marenigrum (strain WH8102).